A 417-amino-acid polypeptide reads, in one-letter code: NADH-quinone oxidoreductase subunit D (417 aa).

This sequence belongs to the complex I 49 kDa subunit family. As to quaternary structure, NDH-1 is composed of 14 different subunits. Subunits NuoB, C, D, E, F, and G constitute the peripheral sector of the complex.

It is found in the cell inner membrane. It catalyses the reaction a quinone + NADH + 5 H(+)(in) = a quinol + NAD(+) + 4 H(+)(out). In terms of biological role, NDH-1 shuttles electrons from NADH, via FMN and iron-sulfur (Fe-S) centers, to quinones in the respiratory chain. The immediate electron acceptor for the enzyme in this species is believed to be ubiquinone. Couples the redox reaction to proton translocation (for every two electrons transferred, four hydrogen ions are translocated across the cytoplasmic membrane), and thus conserves the redox energy in a proton gradient. The sequence is that of NADH-quinone oxidoreductase subunit D from Paraburkholderia phymatum (strain DSM 17167 / CIP 108236 / LMG 21445 / STM815) (Burkholderia phymatum).